The following is a 114-amino-acid chain: Procyclic form-specific polypeptide A-alpha (114 aa).

The N-terminal stretch at 1–27 (MAPRSLYLLAILLFSANLFAGVGFAAA) is a signal peptide. The segment at 33-95 (SNVIVKGGKG…EPEPEPGAAT (63 aa)) is disordered. Acidic residues predominate over residues 47 to 89 (DGPEEPEETGPEETGPEETGPEETGPEETGPEETGPEETEPEP). A run of 7 repeats spans residues 48–52 (GPEEP), 56–60 (GPEET), 61–65 (GPEET), 66–70 (GPEET), 71–75 (GPEET), 76–80 (GPEET), and 81–85 (GPEET). A 7 X 5 AA tandem repeats of G-P-E-E-[PT] region spans residues 48-85 (GPEEPEETGPEETGPEETGPEETGPEETGPEETGPEET). Gly92 carries the GPI-anchor amidated glycine lipid modification. Residues 93 to 114 (AATLKSVALPFAVAAAALVAAF) constitute a propeptide that is removed on maturation.

It localises to the cell membrane. Major surface antigen of procyclic forms. The polypeptide is Procyclic form-specific polypeptide A-alpha (PARPA-ALPHA) (Trypanosoma brucei brucei).